A 318-amino-acid chain; its full sequence is Guanidinopropionase (318 aa).

Mn(2+) is bound by residues His126, Asp148, His150, Asp152, Asp240, and Asp242.

It belongs to the arginase family. Agmatinase subfamily. As to quaternary structure, homohexamer. Mn(2+) is required as a cofactor.

It carries out the reaction 3-guanidinopropanoate + H2O = urea + beta-alanine. Its function is as follows. Catalyzes the hydrolysis of 3-guanidinopropanoate to beta-alanine and urea. Possesses low activity against 4-guanidinobutanoate. Has no activity against arginine and agmatine. In Pseudomonas aeruginosa (strain ATCC 15692 / DSM 22644 / CIP 104116 / JCM 14847 / LMG 12228 / 1C / PRS 101 / PAO1), this protein is Guanidinopropionase (gpuA).